The following is a 67-amino-acid chain: UPF0253 protein VS_2370 (67 aa).

Belongs to the UPF0253 family.

This chain is UPF0253 protein VS_2370, found in Vibrio atlanticus (strain LGP32) (Vibrio splendidus (strain Mel32)).